The primary structure comprises 274 residues: MDKPKAYCRLFLPSFLLLSACTVDISQPDPSATAVDAEAKTWAVKFQHQSSFTEQSIKEITAPDLKPGDLLFSSSLGVTSFGIRVFSTSSVSHVAIFLGDNNVAEATGAGVQIVSLKKAMKHSDKLFVLRVPDLTPQQATDITAFANKIKDSGYNYRGIVEFIPFMVTRQMCSLNPFSEDFRQQCVSGLAKAQLSSVGEGDKKSWFCSEFVTDAFAKAGHPLTLAQSGWISPADLMHMRIGDVSAFKPETQLQYVGHLKPGIYIKAGRFVGLTR.

Positions 1-20 (MDKPKAYCRLFLPSFLLLSA) are cleaved as a signal peptide. Cys21 carries the N-palmitoyl cysteine lipid modification. The S-diacylglycerol cysteine moiety is linked to residue Cys21. Cys207 acts as the Nucleophile in catalysis. His257 functions as the Proton acceptor in the catalytic mechanism.

It is found in the cell inner membrane. This chain is Probable lipoprotein peptidase YaeF (yaeF), found in Escherichia coli (strain K12).